Reading from the N-terminus, the 406-residue chain is DNA primase large subunit PriL (406 aa).

C302, C375, C384, and C389 together coordinate [4Fe-4S] cluster.

This sequence belongs to the eukaryotic-type primase large subunit family. Heterodimer of a small subunit (PriS) and a large subunit (PriL). [4Fe-4S] cluster serves as cofactor.

In terms of biological role, regulatory subunit of DNA primase, an RNA polymerase that catalyzes the synthesis of short RNA molecules used as primers for DNA polymerase during DNA replication. Stabilizes and modulates the activity of the small subunit, increasing the rate of DNA synthesis, and conferring RNA synthesis capability. The DNA polymerase activity may enable DNA primase to also catalyze primer extension after primer synthesis. May also play a role in DNA repair. The sequence is that of DNA primase large subunit PriL from Methanopyrus kandleri (strain AV19 / DSM 6324 / JCM 9639 / NBRC 100938).